A 340-amino-acid chain; its full sequence is Lysophospholipase L2 (340 aa).

It localises to the cell inner membrane. It carries out the reaction a 1-acyl-sn-glycero-3-phosphocholine + H2O = sn-glycerol 3-phosphocholine + a fatty acid + H(+). In Escherichia coli O6:H1 (strain CFT073 / ATCC 700928 / UPEC), this protein is Lysophospholipase L2 (pldB).